The following is a 71-amino-acid chain: Exodeoxyribonuclease 7 small subunit (71 aa).

This sequence belongs to the XseB family. In terms of assembly, heterooligomer composed of large and small subunits.

Its subcellular location is the cytoplasm. The catalysed reaction is Exonucleolytic cleavage in either 5'- to 3'- or 3'- to 5'-direction to yield nucleoside 5'-phosphates.. In terms of biological role, bidirectionally degrades single-stranded DNA into large acid-insoluble oligonucleotides, which are then degraded further into small acid-soluble oligonucleotides. The sequence is that of Exodeoxyribonuclease 7 small subunit from Endomicrobium trichonymphae.